Reading from the N-terminus, the 156-residue chain is Myosin regulatory light chain B, smooth adductor muscle (156 aa).

Position 1 is a blocked amino end (Ala) (alanine 1). EF-hand domains lie at 15–50 (KQIQ…LGRT) and 84–119 (DTEE…MGDN). Aspartate 28, asparagine 30, aspartate 32, and aspartate 39 together coordinate Ca(2+).

Functionally, in molluscan muscle, calcium regulation is associated with myosin rather than with actin. Muscle myosin contains two types of light chains: the catalytic light chain, essential for ATPase activity, and the regulatory light chain, a calcium-binding protein responsible for Ca(2+) dependent binding and Ca(2+) dependent Mg-ATPase activity. This chain is Myosin regulatory light chain B, smooth adductor muscle, found in Mizuhopecten yessoensis (Japanese scallop).